The chain runs to 446 residues: Branched-chain amino acid permease BrnQ (446 aa).

Transmembrane regions (helical) follow at residues 13-33 (ISSM…PAYL), 41-61 (LWIS…LAIA), 81-101 (KYSY…FAIP), 120-140 (MAKS…MLFF), 154-174 (FLTP…LLHP), 196-216 (VLAG…IIVI), 237-257 (TGVL…LVGA), 285-305 (GAVI…IGLI), 325-345 (WAII…TTII), 347-367 (FSLP…LLAL), 381-401 (IMTA…LPAG), and 421-441 (GLGW…KGVI).

This sequence belongs to the branched chain amino acid transporter family.

It localises to the cell membrane. Its activity is regulated as follows. Leucine uptake is inhibited by the proton ionophore carbonyl cyanide m-chlorophenylhydrazone (CCCP). Branched chain amino acid transport system which is involved in the uptake of leucine, valine and isoleucine. The proton motive force is probably the driving force for transport. The polypeptide is Branched-chain amino acid permease BrnQ (Lactobacillus delbrueckii subsp. lactis).